The primary structure comprises 1257 residues: uncharacterized protein (1257 aa).

A disordered region spans residues 1–26; sequence MNFSNKPNKSRKKSNRKNKKSNKSNT. Over residues 8–22 the composition is skewed to basic residues; it reads NKSRKKSNRKNKKSN.

The protein localises to the virion. This is an uncharacterized protein from Acanthamoeba polyphaga mimivirus (APMV).